The sequence spans 418 residues: Enolase (418 aa).

Gln-162 serves as a coordination point for (2R)-2-phosphoglycerate. Catalysis depends on Glu-204, which acts as the Proton donor. The Mg(2+) site is built by Asp-241, Glu-283, and Asp-309. (2R)-2-phosphoglycerate is bound by residues Lys-334, Arg-363, Ser-364, and Lys-385. Lys-334 serves as the catalytic Proton acceptor.

Belongs to the enolase family. Requires Mg(2+) as cofactor.

It is found in the cytoplasm. Its subcellular location is the secreted. It localises to the cell surface. The enzyme catalyses (2R)-2-phosphoglycerate = phosphoenolpyruvate + H2O. It participates in carbohydrate degradation; glycolysis; pyruvate from D-glyceraldehyde 3-phosphate: step 4/5. Its function is as follows. Catalyzes the reversible conversion of 2-phosphoglycerate (2-PG) into phosphoenolpyruvate (PEP). It is essential for the degradation of carbohydrates via glycolysis. The polypeptide is Enolase (Pelagibacter ubique (strain HTCC1062)).